A 220-amino-acid chain; its full sequence is UPF0758 protein Asuc_0013 (220 aa).

Residues 98–220 (EFTNPLTVRL…YFSFAEQDWL (123 aa)) enclose the MPN domain. Positions 169, 171, and 182 each coordinate Zn(2+). Residues 169–182 (HNHPSGSAEPSASD) carry the JAMM motif motif.

The protein belongs to the UPF0758 family.

The polypeptide is UPF0758 protein Asuc_0013 (Actinobacillus succinogenes (strain ATCC 55618 / DSM 22257 / CCUG 43843 / 130Z)).